The following is a 460-amino-acid chain: MAGKSIFDKLWERHVITGQEGQPQLMYVDQHYIHEVTSPQAFQGLRDAGRKVRRPDLTFGTFDHNVPTVNIYDIRDVISKAQIDKLSENVKDFGIEHAAHGSELQGIVHMVGPETGKTQPGKFIVCGDSHTATHGAFGAIAFGIGTSEVEHVFATQTIWQVKPKKMLVKFTGVPPKGVYSKDFILALIARYGVAAGVGHVVEYAGDAIEHLTMEERMTICNMSIEFGSKMGIMNPDQKTYDYVQGRPGAPKDFEAAVADWKTLVSDPDAVYDKVIEIDVSQLAPMVTWGTNPSMGVEFGAAFPEIRDMNDERAYNYMDLSPGKKAEDIDLGYIFIGSCTNARLSDLQLAAKFVAGKHIAPNLTAIVVPGSRPVKRVAEKMGLDKIFMDAGFEWRDPGCSMCLGMNPDKVPDGVHCASTSNRNFEDRQGFGAKTHLCSPAMAAAAAIAGRFVDIRQLPEVQ.

Cys338, Cys398, and Cys401 together coordinate [4Fe-4S] cluster.

Belongs to the aconitase/IPM isomerase family. LeuC type 1 subfamily. Heterodimer of LeuC and LeuD. It depends on [4Fe-4S] cluster as a cofactor.

It carries out the reaction (2R,3S)-3-isopropylmalate = (2S)-2-isopropylmalate. It participates in amino-acid biosynthesis; L-leucine biosynthesis; L-leucine from 3-methyl-2-oxobutanoate: step 2/4. Catalyzes the isomerization between 2-isopropylmalate and 3-isopropylmalate, via the formation of 2-isopropylmaleate. In Streptococcus gordonii (strain Challis / ATCC 35105 / BCRC 15272 / CH1 / DL1 / V288), this protein is 3-isopropylmalate dehydratase large subunit.